Reading from the N-terminus, the 410-residue chain is Translation initiation factor 2 subunit gamma (410 aa).

Residues 6–203 (QSEINIGMVG…AIEDLMPTPE (198 aa)) form the tr-type G domain. The G1 stretch occupies residues 15 to 22 (GHVDHGKT). Residues D18, T22, G43, and S45 each coordinate Mg(2+). 18–23 (DHGKTS) contacts GTP. The interval 43–47 (GISIR) is G2. Residues C58, C61, C73, and C76 each coordinate Zn(2+). The interval 90–93 (DAPG) is G3. Residues 146-149 (NKID) and 181-183 (SAH) each bind GTP. The tract at residues 146 to 149 (NKID) is G4. The tract at residues 181–183 (SAH) is G5.

This sequence belongs to the TRAFAC class translation factor GTPase superfamily. Classic translation factor GTPase family. EIF2G subfamily. In terms of assembly, heterotrimer composed of an alpha, a beta and a gamma chain. It depends on Mg(2+) as a cofactor.

It catalyses the reaction GTP + H2O = GDP + phosphate + H(+). EIF-2 functions in the early steps of protein synthesis by forming a ternary complex with GTP and initiator tRNA. This is Translation initiation factor 2 subunit gamma from Methanococcus aeolicus (strain ATCC BAA-1280 / DSM 17508 / OCM 812 / Nankai-3).